A 120-amino-acid chain; its full sequence is Putative non-specific lipid-transfer protein 14 (120 aa).

The N-terminal stretch at 1–22 is a signal peptide; sequence MTRSFSPVVSLFLLLLQTICSA. Intrachain disulfides connect Cys30–Cys80, Cys40–Cys57, Cys58–Cys102, and Cys78–Cys116.

The protein belongs to the plant LTP family.

In terms of biological role, plant non-specific lipid-transfer proteins transfer phospholipids as well as galactolipids across membranes. May play a role in wax or cutin deposition in the cell walls of expanding epidermal cells and certain secretory tissues. This Arabidopsis thaliana (Mouse-ear cress) protein is Putative non-specific lipid-transfer protein 14 (LTP14).